The following is a 36-amino-acid chain: Kappa-theraphotoxin-Pg1a (36 aa).

3 disulfide bridges follow: cysteine 4–cysteine 19, cysteine 11–cysteine 24, and cysteine 18–cysteine 31.

Belongs to the neurotoxin 10 (Hwtx-1) family. 44 (Jztx-4) subfamily. In terms of tissue distribution, expressed by the venom gland.

Its subcellular location is the secreted. In terms of biological role, gating modifier of Kv2.1/KCNB1 (IC(50)=5.1 nM), Kv2.2/KCNB2 and Kv4.3/KCND3 channels (IC(50)=39 nM). Acts by shifting the channel activation to more depolarized potentials by stabilizing the resting conformation of the voltage sensor. It completely inhibits opening of the Kv2.1/KCNB1 channel at negative membrane voltages and dramatically shifts channel activation to positive voltages. May act by partitioning into lipid membranes and then by binding the voltage sensor paddle of the channel from a place within the membrane. The sequence is that of Kappa-theraphotoxin-Pg1a from Chilobrachys guangxiensis (Chinese earth tiger tarantula).